The primary structure comprises 25 residues: Repetitive proline-rich cell wall protein (25 aa).

Residues 1-25 are disordered; that stretch reads NYDKPPVEKPPVYKPPVEKPPVYKP. 4 consecutive repeat copies span residues 5 to 9, 10 to 14, 15 to 19, and 20 to 24. The tract at residues 5–24 is 4 X 5 AA tandem repeats of P-P-V-[EY]-K; sequence PPVEKPPVYKPPVEKPPVYK. 4 positions are modified to 4-hydroxyproline: proline 6, proline 11, proline 16, and proline 21. Pro residues predominate over residues 8–25; the sequence is EKPPVYKPPVEKPPVYKP.

The protein belongs to the plant proline-rich protein superfamily. ENOD12 family.

Its subcellular location is the secreted. The protein resides in the cell wall. In Phaseolus vulgaris (Kidney bean), this protein is Repetitive proline-rich cell wall protein.